A 317-amino-acid polypeptide reads, in one-letter code: Heme-binding protein HMX1 (317 aa).

Residues 1-289 lie on the Cytoplasmic side of the membrane; that stretch reads MEDSSNTIIP…FNKDSATRRA (289 aa). A helical; Anchor for type IV membrane protein transmembrane segment spans residues 290-310; that stretch reads LHTVMLLVLSIIAIWVLYFLV.

It depends on heme as a cofactor.

The protein resides in the endoplasmic reticulum membrane. Functionally, plays an important role in the degradation of heme under conditions of iron deprivation. The sequence is that of Heme-binding protein HMX1 (HMX1) from Saccharomyces cerevisiae (strain ATCC 204508 / S288c) (Baker's yeast).